Consider the following 199-residue polypeptide: Phosphoserine phosphatase RsbX (199 aa).

Positions 11–198 constitute a PPM-type phosphatase domain; the sequence is QTLVYQLNKE…DDLTYILGQL (188 aa).

It carries out the reaction O-phospho-L-serine + H2O = L-serine + phosphate. The enzyme catalyses O-phospho-D-serine + H2O = D-serine + phosphate. Negative regulator of sigma-B activity. Dephosphorylates RsbS. Plays a role both in maintaining low sigma-B activity during growth and in reestablishing prestress sigma-B activity after induction. Could have a negative feedback role by indirectly communicating sigma-B protein levels. The chain is Phosphoserine phosphatase RsbX (rsbX) from Bacillus subtilis (strain 168).